The primary structure comprises 397 residues: Mannonate dehydratase (397 aa).

It belongs to the mannonate dehydratase family. Requires Fe(2+) as cofactor. The cofactor is Mn(2+).

The enzyme catalyses D-mannonate = 2-dehydro-3-deoxy-D-gluconate + H2O. It functions in the pathway carbohydrate metabolism; pentose and glucuronate interconversion. Catalyzes the dehydration of D-mannonate. This chain is Mannonate dehydratase, found in Saccharophagus degradans (strain 2-40 / ATCC 43961 / DSM 17024).